We begin with the raw amino-acid sequence, 225 residues long: Cytidylate kinase (225 aa).

11 to 19 (GPAAAGKST) contacts ATP.

This sequence belongs to the cytidylate kinase family. Type 1 subfamily.

It localises to the cytoplasm. The catalysed reaction is CMP + ATP = CDP + ADP. It carries out the reaction dCMP + ATP = dCDP + ADP. This chain is Cytidylate kinase, found in Bacillus pumilus (strain SAFR-032).